Here is a 200-residue protein sequence, read N- to C-terminus: Elongation factor Ts (200 aa).

The involved in Mg(2+) ion dislocation from EF-Tu stretch occupies residues 83–86 (TDFA).

The protein belongs to the EF-Ts family.

It localises to the cytoplasm. Its function is as follows. Associates with the EF-Tu.GDP complex and induces the exchange of GDP to GTP. It remains bound to the aminoacyl-tRNA.EF-Tu.GTP complex up to the GTP hydrolysis stage on the ribosome. In Syntrophobacter fumaroxidans (strain DSM 10017 / MPOB), this protein is Elongation factor Ts.